The following is a 379-amino-acid chain: GTP cyclohydrolase 1 type 2 homolog (379 aa).

A divalent metal cation-binding residues include His-64, His-65, Asp-103, His-333, and Glu-337.

The protein belongs to the GTP cyclohydrolase I type 2/NIF3 family. As to quaternary structure, homohexamer.

In Mycobacterium bovis (strain ATCC BAA-935 / AF2122/97), this protein is GTP cyclohydrolase 1 type 2 homolog.